The chain runs to 140 residues: Ribosome-binding factor A (140 aa).

The disordered stretch occupies residues 1–23 (MLRDRNRSGVRGGAEGPSQRQRR).

It belongs to the RbfA family. As to quaternary structure, monomer. Binds 30S ribosomal subunits, but not 50S ribosomal subunits or 70S ribosomes.

It is found in the cytoplasm. In terms of biological role, one of several proteins that assist in the late maturation steps of the functional core of the 30S ribosomal subunit. Associates with free 30S ribosomal subunits (but not with 30S subunits that are part of 70S ribosomes or polysomes). Required for efficient processing of 16S rRNA. May interact with the 5'-terminal helix region of 16S rRNA. The protein is Ribosome-binding factor A of Acidiphilium cryptum (strain JF-5).